A 727-amino-acid chain; its full sequence is Probable metal-nicotianamine transporter YSL14 (727 aa).

Composition is skewed to low complexity over residues 1 to 10 and 18 to 27; these read MAQHTAAAAG and AEAAAAAAAG. The disordered stretch occupies residues 1–61; it reads MAQHTAAAAG…RNGGADDPDA (61 aa). Residues 45 to 54 show a composition bias toward gly residues; that stretch reads AGGGGGGRNG. 14 helical membrane-spanning segments follow: residues 84–104, 107–127, 152–172, 194–214, 256–276, 314–334, 359–379, 432–452, 460–480, 492–512, 546–566, 604–624, 646–666, and 681–701; these read AFVV…KLNL, GIIP…VRLW, CVVS…LFGM, LGWM…ALVP, LGKY…YTAG, IVNV…WPLI, VFIS…KVLI, VAYG…PEIF, ILVA…GSGL, LAIF…LVGL, FISQ…VFWL, PENC…INLI, FYIG…LFVW, and VASG…ILAL.

The protein belongs to the YSL (TC 2.A.67.2) family. Expressed in leaves and at low levels in roots.

It localises to the membrane. Its function is as follows. May be involved in the transport of nicotianamine-chelated metals. The protein is Probable metal-nicotianamine transporter YSL14 (YSL14) of Oryza sativa subsp. japonica (Rice).